The chain runs to 166 residues: Endoribonuclease YbeY (166 aa).

Positions 131, 135, and 141 each coordinate Zn(2+).

It belongs to the endoribonuclease YbeY family. Zn(2+) is required as a cofactor.

The protein localises to the cytoplasm. In terms of biological role, single strand-specific metallo-endoribonuclease involved in late-stage 70S ribosome quality control and in maturation of the 3' terminus of the 16S rRNA. This chain is Endoribonuclease YbeY, found in Dehalococcoides mccartyi (strain CBDB1).